The following is a 3343-amino-acid chain: Cadherin-3 (3343 aa).

Residues 1 to 26 form the signal peptide; sequence MTIRIFFSIFLLNHLIFFHLFNFTHQ. A glycan (N-linked (GlcNAc...) asparagine) is linked at N22. Over 27–3228 the chain is Extracellular; that stretch reads FSEETIKFSV…LFSNFSNTTT (3202 aa). Cadherin domains follow at residues 28-117, 118-229, and 242-330; these read SEET…SPIF, PIDV…PPNF, and PNTK…EPNI. N149, N250, N288, N369, N467, and N612 each carry an N-linked (GlcNAc...) asparagine glycan. The Cadherin 4 domain maps to 632 to 738; sequence ICQITEIHVL…EDVNDNVPKF (107 aa). N-linked (GlcNAc...) asparagine glycans are attached at residues N752, N806, N941, N966, N970, N985, N1042, N1335, N1425, N1429, N1557, N1563, N1597, N1624, N1695, and N1702. One can recognise a Cadherin 5 domain in the interval 1279 to 1368; that stretch reads RENELMFEIE…ADVNDNKPKI (90 aa). Cadherin domains are found at residues 1545 to 1648, 1676 to 1756, and 1757 to 1857; these read DKAA…APRF, AEDL…TPEF, and ELSS…HPMI. N-linked (GlcNAc...) asparagine glycosylation is found at N1895 and N1900. Cadherin domains are found at residues 1954 to 2045, 2046 to 2145, and 2146 to 2245; these read TVSV…SPRF, DQQL…NAPR, and FSRI…APIF. N-linked (GlcNAc...) asparagine glycans are attached at residues N2053, N2129, N2203, N2382, N2391, N2410, N2414, N2431, N2527, N2530, N2564, N2621, N2665, N2712, N2798, N2809, N2927, N2976, and N3045. In terms of domain architecture, Laminin G-like spans 3040 to 3205; sequence EISVRNGTSH…SSTGTSRNEC (166 aa). A disulfide bridge connects residues C3172 and C3205. 2 N-linked (GlcNAc...) asparagine glycosylation sites follow: N3222 and N3225. The chain crosses the membrane as a helical span at residues 3229-3250; that stretch reads LILLITLALISLIGFSVCLLAI. Residues 3251 to 3343 lie on the Cytoplasmic side of the membrane; it reads RRRWRQKSPG…RDGHINMAYL (93 aa). The interval 3257–3277 is disordered; that stretch reads KSPGDQKQTERSNGWTGHVMP.

Expressed in the anchor cell.

The protein localises to the cell membrane. It localises to the basolateral cell membrane. Its subcellular location is the cell junction. In terms of biological role, cell adhesion protein involved in the control of epithelial morphogenesis. Together with metalloproteinase zmp-1 and hemicentin him-4, plays a role in anchor cell (AC) invasion during postembryonic vulval development. The protein is Cadherin-3 (cdh-3) of Caenorhabditis elegans.